The primary structure comprises 182 residues: Large ribosomal subunit protein uL16 (182 aa).

Belongs to the universal ribosomal protein uL16 family.

In Pyrobaculum arsenaticum (strain DSM 13514 / JCM 11321 / PZ6), this protein is Large ribosomal subunit protein uL16.